Reading from the N-terminus, the 739-residue chain is Phosphoribosylformylglycinamidine synthase subunit PurL (739 aa).

The active site involves His-54. ATP is bound by residues Tyr-57 and Lys-96. Glu-98 is a Mg(2+) binding site. Residues 99–102 (SHNH) and Arg-121 each bind substrate. The active-site Proton acceptor is the His-100. Position 122 (Asp-122) interacts with Mg(2+). Substrate is bound at residue Gln-245. Position 275 (Asp-275) interacts with Mg(2+). 319–321 (ESQ) serves as a coordination point for substrate. The ATP site is built by Asp-504 and Gly-541. Position 542 (Asn-542) interacts with Mg(2+). Ser-544 contacts substrate.

Belongs to the FGAMS family. Monomer. Part of the FGAM synthase complex composed of 1 PurL, 1 PurQ and 2 PurS subunits.

The protein localises to the cytoplasm. The catalysed reaction is N(2)-formyl-N(1)-(5-phospho-beta-D-ribosyl)glycinamide + L-glutamine + ATP + H2O = 2-formamido-N(1)-(5-O-phospho-beta-D-ribosyl)acetamidine + L-glutamate + ADP + phosphate + H(+). Its pathway is purine metabolism; IMP biosynthesis via de novo pathway; 5-amino-1-(5-phospho-D-ribosyl)imidazole from N(2)-formyl-N(1)-(5-phospho-D-ribosyl)glycinamide: step 1/2. In terms of biological role, part of the phosphoribosylformylglycinamidine synthase complex involved in the purines biosynthetic pathway. Catalyzes the ATP-dependent conversion of formylglycinamide ribonucleotide (FGAR) and glutamine to yield formylglycinamidine ribonucleotide (FGAM) and glutamate. The FGAM synthase complex is composed of three subunits. PurQ produces an ammonia molecule by converting glutamine to glutamate. PurL transfers the ammonia molecule to FGAR to form FGAM in an ATP-dependent manner. PurS interacts with PurQ and PurL and is thought to assist in the transfer of the ammonia molecule from PurQ to PurL. This is Phosphoribosylformylglycinamidine synthase subunit PurL from Lactococcus lactis subsp. cremoris (Streptococcus cremoris).